A 99-amino-acid chain; its full sequence is DNA-directed RNA polymerase subunit omega (99 aa).

It belongs to the RNA polymerase subunit omega family. The RNAP catalytic core consists of 2 alpha, 1 beta, 1 beta' and 1 omega subunit. When a sigma factor is associated with the core the holoenzyme is formed, which can initiate transcription.

The catalysed reaction is RNA(n) + a ribonucleoside 5'-triphosphate = RNA(n+1) + diphosphate. Its function is as follows. Promotes RNA polymerase assembly. Latches the N- and C-terminal regions of the beta' subunit thereby facilitating its interaction with the beta and alpha subunits. This is DNA-directed RNA polymerase subunit omega from Xanthomonas axonopodis pv. citri (strain 306).